The primary structure comprises 408 residues: Probable cysteine desulfurase (408 aa).

Lys-225 is subject to N6-(pyridoxal phosphate)lysine.

The protein belongs to the class-V pyridoxal-phosphate-dependent aminotransferase family. Csd subfamily. It depends on pyridoxal 5'-phosphate as a cofactor.

The enzyme catalyses (sulfur carrier)-H + L-cysteine = (sulfur carrier)-SH + L-alanine. Functionally, catalyzes the removal of elemental sulfur and selenium atoms from L-cysteine, L-cystine, L-selenocysteine, and L-selenocystine to produce L-alanine. This is Probable cysteine desulfurase (csd) from Mycoplasma pneumoniae (strain ATCC 29342 / M129 / Subtype 1) (Mycoplasmoides pneumoniae).